The chain runs to 161 residues: MSIVTKSIVNADAEARYLSPGELDRIKAFVTGGAARLRIAETLTGSRETIVKQAGDRLFQKRPDIVSPGGNAYGEEMTATCLRDMDYYLRLVTYGVVSGDVTPIEEIGLVGVREMYRSLGTPIEAVAQSVREMKEVASGLMSSDDAAEASAYFDFVIGKMS.

Asn-71 is modified (N4-methylasparagine). Cys-81 is a (2R,3E)-phycocyanobilin binding site.

This sequence belongs to the phycobiliprotein family. Heterodimer of an alpha and a beta chain. In terms of processing, contains one covalently linked phycocyanobilin chromophore.

The protein localises to the cellular thylakoid membrane. Light-harvesting photosynthetic bile pigment-protein from the phycobiliprotein complex. Allophycocyanin has a maximum absorption at approximately 650 nanometers. In Synechocystis sp. (strain ATCC 27184 / PCC 6803 / Kazusa), this protein is Allophycocyanin alpha chain (apcA).